We begin with the raw amino-acid sequence, 233 residues long: Large ribosomal subunit protein bL25 (233 aa).

The segment at 1-23 is disordered; it reads MATVRELKATARPKSGKGAARAE.

Belongs to the bacterial ribosomal protein bL25 family. CTC subfamily. Part of the 50S ribosomal subunit; part of the 5S rRNA/L5/L18/L25 subcomplex. Contacts the 5S rRNA. Binds to the 5S rRNA independently of L5 and L18.

In terms of biological role, this is one of the proteins that binds to the 5S RNA in the ribosome where it forms part of the central protuberance. This is Large ribosomal subunit protein bL25 from Nitrobacter hamburgensis (strain DSM 10229 / NCIMB 13809 / X14).